The following is a 330-amino-acid chain: Phosphatidylglycerol--prolipoprotein diacylglyceryl transferase (330 aa).

Transmembrane regions (helical) follow at residues 22-42 (LPIR…LVVG), 57-77 (YDIA…YHLA), and 97-117 (IWDG…GAWL). Position 145 (Arg-145) interacts with a 1,2-diacyl-sn-glycero-3-phospho-(1'-sn-glycerol). 2 helical membrane-spanning segments follow: residues 193–213 (VVQP…FALI) and 257–277 (INSF…ILAP).

The protein belongs to the Lgt family.

The protein localises to the cell membrane. The catalysed reaction is L-cysteinyl-[prolipoprotein] + a 1,2-diacyl-sn-glycero-3-phospho-(1'-sn-glycerol) = an S-1,2-diacyl-sn-glyceryl-L-cysteinyl-[prolipoprotein] + sn-glycerol 1-phosphate + H(+). It participates in protein modification; lipoprotein biosynthesis (diacylglyceryl transfer). Catalyzes the transfer of the diacylglyceryl group from phosphatidylglycerol to the sulfhydryl group of the N-terminal cysteine of a prolipoprotein, the first step in the formation of mature lipoproteins. In Mycobacterium leprae (strain Br4923), this protein is Phosphatidylglycerol--prolipoprotein diacylglyceryl transferase.